A 293-amino-acid polypeptide reads, in one-letter code: GTPase Era (293 aa).

The 170-residue stretch at 5–174 (RTISVCIIGR…ITGKAQIAPW (170 aa)) folds into the Era-type G domain. A G1 region spans residues 13–20 (GRPNSGKS). GTP is bound at residue 13–20 (GRPNSGKS). The G2 stretch occupies residues 39–43 (QTTRS). The tract at residues 60–63 (DTPG) is G3. Residues 60–64 (DTPGI) and 122–125 (NKID) contribute to the GTP site. Residues 122–125 (NKID) form a G4 region. The tract at residues 150-152 (ISA) is G5. The 78-residue stretch at 202-279 (LQQELPYKLT…HLFLFVKVHE (78 aa)) folds into the KH type-2 domain.

This sequence belongs to the TRAFAC class TrmE-Era-EngA-EngB-Septin-like GTPase superfamily. Era GTPase family. In terms of assembly, monomer.

The protein resides in the cytoplasm. The protein localises to the cell inner membrane. An essential GTPase that binds both GDP and GTP, with rapid nucleotide exchange. Plays a role in 16S rRNA processing and 30S ribosomal subunit biogenesis and possibly also in cell cycle regulation and energy metabolism. This chain is GTPase Era, found in Rickettsia akari (strain Hartford).